Here is a 78-residue protein sequence, read N- to C-terminus: Beta-defensin 105A (78 aa).

Residues 1–27 (MALIRKTFYFVFAVFFILVQQPSGCQA) form the signal peptide. 3 disulfide bridges follow: Cys-43/Cys-74, Cys-53/Cys-67, and Cys-57/Cys-73.

Belongs to the beta-defensin family.

The protein localises to the secreted. Has antimicrobial activity. In Macaca fascicularis (Crab-eating macaque), this protein is Beta-defensin 105A (DEFB105A).